A 328-amino-acid chain; its full sequence is DNA-directed RNA polymerase subunit alpha (328 aa).

The interval 1 to 232 (MSTQGFLKPR…DQISVFAALE (232 aa)) is alpha N-terminal domain (alpha-NTD). The interval 248-328 (IDPVLLRPVD…NWPPLGLERP (81 aa)) is alpha C-terminal domain (alpha-CTD).

Belongs to the RNA polymerase alpha chain family. In terms of assembly, homodimer. The RNAP catalytic core consists of 2 alpha, 1 beta, 1 beta' and 1 omega subunit. When a sigma factor is associated with the core the holoenzyme is formed, which can initiate transcription.

The catalysed reaction is RNA(n) + a ribonucleoside 5'-triphosphate = RNA(n+1) + diphosphate. In terms of biological role, DNA-dependent RNA polymerase catalyzes the transcription of DNA into RNA using the four ribonucleoside triphosphates as substrates. This Bordetella bronchiseptica (strain ATCC BAA-588 / NCTC 13252 / RB50) (Alcaligenes bronchisepticus) protein is DNA-directed RNA polymerase subunit alpha.